A 341-amino-acid chain; its full sequence is tRNA N6-adenosine threonylcarbamoyltransferase (341 aa).

2 residues coordinate Fe cation: H111 and H115. Residues 134–138 (LVSGG), D167, G180, and N276 each bind substrate. Residue D304 coordinates Fe cation.

Belongs to the KAE1 / TsaD family. Requires Fe(2+) as cofactor.

Its subcellular location is the cytoplasm. It carries out the reaction L-threonylcarbamoyladenylate + adenosine(37) in tRNA = N(6)-L-threonylcarbamoyladenosine(37) in tRNA + AMP + H(+). Required for the formation of a threonylcarbamoyl group on adenosine at position 37 (t(6)A37) in tRNAs that read codons beginning with adenine. Is involved in the transfer of the threonylcarbamoyl moiety of threonylcarbamoyl-AMP (TC-AMP) to the N6 group of A37, together with TsaE and TsaB. TsaD likely plays a direct catalytic role in this reaction. This is tRNA N6-adenosine threonylcarbamoyltransferase from Pseudomonas aeruginosa (strain LESB58).